Here is a 192-residue protein sequence, read N- to C-terminus: MGQIEWAMWANEQALASGLILMTGGIVATAGQFTQWYLGTYSIAAGVLVCLLEYPRGRRTKGSTMERCEQKYMTKVVKAFGPLSRNYYIRAFLHLGLSVPAGFLLATILGTACLAIASGIYLLAAIRGEQWTPIEPKPKERPQVGGTIKQPPSNPPPRPPPEARKKPGEEAVAGVPRGAPRKTPCPVTDEVV.

Over 2–7 (GQIEWA) the chain is Cytoplasmic. The chain crosses the membrane as a helical span at residues 8 to 30 (MWANEQALASGLILMTGGIVATA). Residues 31 to 35 (GQFTQ) lie on the Extracellular side of the membrane. Residues 36 to 53 (WYLGTYSIAAGVLVCLLE) traverse the membrane as a helical segment. Residues 54–69 (YPRGRRTKGSTMERCE) are Cytoplasmic-facing. An intramembrane segment occupies 70–80 (QKYMTKVVKAF). Topologically, residues 81 to 86 (GPLSRN) are cytoplasmic. A helical transmembrane segment spans residues 87-104 (YYIRAFLHLGLSVPAGFL). Residue Leu105 is a topological domain, extracellular. The chain crosses the membrane as a helical span at residues 106-126 (ATILGTACLAIASGIYLLAAI). At 127–192 (RGEQWTPIEP…TPCPVTDEVV (66 aa)) the chain is on the cytoplasmic side. The interval 134–192 (IEPKPKERPQVGGTIKQPPSNPPPRPPPEARKKPGEEAVAGVPRGAPRKTPCPVTDEVV) is disordered. Thr147 carries the post-translational modification Phosphothreonine. Lys149 is covalently cross-linked (Glycyl lysine isopeptide (Lys-Gly) (interchain with G-Cter in ubiquitin)).

It belongs to the p22phox family. As to quaternary structure, component of the phagocyte NADPH oxidase core complex/cytochrome b558 complex, composed of CYBB (heavy chain (beta)) and CYBA (light chain (alpha)). Component of the phagocyte NADPH oxidase complex composed of an obligatory core heterodimer formed by the membrane proteins CYBA and CYBB and the cytosolic regulatory subunits NCF1/p47-phox, NCF2/p67-phox, NCF4/p40-phox and the small GTPase RAC1 or RAC2. Interacts with NCF1 (via SH3 domain). Interacts with SH3PXD2A. Interacts with DUOX1, DUOX2 and TPO. Interacts with NOX4; this interaction mediates superoxide generation. Interacts with calprotectin (S100A8/9). Interacts with GBP7. Interacts with NOXO1. Forms a heterodimer with NOX3 and is essential for activity and cell membrane localization of NOX3. Interacts with NOX1. In terms of processing, phosphorylation at Thr-147 enhances NADPH oxidase activity by promoting NCF1/p47-phox binding. Ubiquitinated at Lys-149 likely by RNF145.

Its subcellular location is the cell membrane. In terms of biological role, subunit of NADPH oxidase complexes that is required for the NADPH oxidase activity that generates, in various cell types, superoxide from molecular oxygen utilizing NADPH as an electron donor. Subunit of the phagocyte NADPH oxidase complex that mediates the transfer of electrons from cytosolic NADPH to O2 to produce the superoxide anion (O2(-)). In the activated complex, electrons are first transferred from NADPH to flavin adenine dinucleotide (FAD) and subsequently transferred via two heme molecules to molecular oxygen, producing superoxide through an outer-sphere reaction. Activation of the NADPH oxidase complex is initiated by the assembly of cytosolic subunits of the NADPH oxidase complex with the core NADPH oxidase complex to form a complex at the plasma membrane or phagosomal membrane. This activation process is initiated by phosphorylation dependent binding of the cytosolic NCF1/p47-phox subunit to the C-terminus of CYBA/p22-phox. Aassociates with NOX3 to form a functional NADPH oxidase constitutively generating superoxide. The sequence is that of Cytochrome b-245 light chain from Sus scrofa (Pig).